The chain runs to 356 residues: Serine/threonine-protein phosphatase 4 regulatory subunit 2 (356 aa).

Acidic residues predominate over residues 202–240 (NEGAGDDEDDDQDYVDEDSATSEDEEEDVEEEEEEEGPE). A disordered region spans residues 202 to 335 (NEGAGDDEDD…PQLTTSATNV (134 aa)). Residues 326–335 (PQLTTSATNV) are compositionally biased toward polar residues.

The protein belongs to the PPP4R2 family. Regulatory subunit (R2) of the histone H2A phosphatase complex (HTP-C) consisting of PPH3, PSY2 and PSY4.

The protein localises to the nucleus. Its function is as follows. Regulatory subunit of the histone H2A phosphatase complex, which dephosphorylates H2AS128ph (gamma-H2A) that has been displaced from sites of DNA lesions in the double-stranded DNA break repair process. Dephosphorylation is necessary for efficient recovery from the DNA damage checkpoint. The protein is Serine/threonine-protein phosphatase 4 regulatory subunit 2 (PSY4) of Eremothecium gossypii (strain ATCC 10895 / CBS 109.51 / FGSC 9923 / NRRL Y-1056) (Yeast).